A 208-amino-acid chain; its full sequence is ATP-dependent Clp protease proteolytic subunit (208 aa).

The Nucleophile role is filled by S107. Residue H132 is part of the active site.

It belongs to the peptidase S14 family. As to quaternary structure, fourteen ClpP subunits assemble into 2 heptameric rings which stack back to back to give a disk-like structure with a central cavity, resembling the structure of eukaryotic proteasomes.

The protein localises to the cytoplasm. The enzyme catalyses Hydrolysis of proteins to small peptides in the presence of ATP and magnesium. alpha-casein is the usual test substrate. In the absence of ATP, only oligopeptides shorter than five residues are hydrolyzed (such as succinyl-Leu-Tyr-|-NHMec, and Leu-Tyr-Leu-|-Tyr-Trp, in which cleavage of the -Tyr-|-Leu- and -Tyr-|-Trp bonds also occurs).. Its function is as follows. Cleaves peptides in various proteins in a process that requires ATP hydrolysis. Has a chymotrypsin-like activity. Plays a major role in the degradation of misfolded proteins. The polypeptide is ATP-dependent Clp protease proteolytic subunit (Jannaschia sp. (strain CCS1)).